The following is a 637-amino-acid chain: Chaperone protein HtpG (637 aa).

The interval 1–345 (MSQQETHGFQ…SNDLPLNVSR (345 aa)) is a; substrate-binding. Positions 346–562 (EILQDNHVTK…DGEMSTQMIK (217 aa)) are b. Residues 563–637 (LMQAAGQPVP…MNQMLLANMK (75 aa)) form a c region.

This sequence belongs to the heat shock protein 90 family. As to quaternary structure, homodimer.

The protein resides in the cytoplasm. Its function is as follows. Molecular chaperone. Has ATPase activity. This Shewanella baltica (strain OS155 / ATCC BAA-1091) protein is Chaperone protein HtpG.